A 360-amino-acid polypeptide reads, in one-letter code: Peptide chain release factor 1 (360 aa).

Residue glutamine 235 is modified to N5-methylglutamine.

The protein belongs to the prokaryotic/mitochondrial release factor family. In terms of processing, methylated by PrmC. Methylation increases the termination efficiency of RF1.

It localises to the cytoplasm. Functionally, peptide chain release factor 1 directs the termination of translation in response to the peptide chain termination codons UAG and UAA. The polypeptide is Peptide chain release factor 1 (Paracidovorax citrulli (strain AAC00-1) (Acidovorax citrulli)).